The chain runs to 69 residues: Large ribosomal subunit protein bL31 (69 aa).

Cysteine 17, cysteine 19, cysteine 37, and cysteine 40 together coordinate Zn(2+).

It belongs to the bacterial ribosomal protein bL31 family. Type A subfamily. Part of the 50S ribosomal subunit. Requires Zn(2+) as cofactor.

Its function is as follows. Binds the 23S rRNA. This Caldicellulosiruptor bescii (strain ATCC BAA-1888 / DSM 6725 / KCTC 15123 / Z-1320) (Anaerocellum thermophilum) protein is Large ribosomal subunit protein bL31.